We begin with the raw amino-acid sequence, 219 residues long: Transmembrane emp24 domain-containing protein 10 (219 aa).

The signal sequence occupies residues 1–31 (MSGLSGPLSWPGPLLSALLFLFLLGPSSVLG). The interval 1–142 (MSGLSGPLSW…KNYEEIAKVE (142 aa)) is required for interaction with STX17. Over 32–185 (ISFHLPVNSR…RDTNESTNTR (154 aa)) the chain is Lumenal. Residues 41–193 (RKCLREEIHK…TRVLYFSIFS (153 aa)) enclose the GOLD domain. Positions 147–178 (LEVELRRLEDLSESIVNDFAYMKKREEEMRDT) are required for TMED10 and TMED2 cis-Golgi network localization. Residues arginine 171 and arginine 176 each carry the dimethylated arginine modification. The N-linked (GlcNAc...) asparagine glycan is linked to asparagine 179. Residues 186-206 (VLYFSIFSMFCLIGLATWQVF) traverse the membrane as a helical segment. The segment at 204-219 (QVFYLRRFFKAKKLIE) is interaction with COPG1. The Cytoplasmic portion of the chain corresponds to 207 to 219 (YLRRFFKAKKLIE). Residues 207-219 (YLRRFFKAKKLIE) are interaction with ARF1 and IL1B. Residues 211 to 212 (FF) carry the COPII vesicle coat-binding motif. The COPI vesicle coat-binding signature appears at 211 to 219 (FFKAKKLIE).

This sequence belongs to the EMP24/GP25L family. In terms of assembly, predominantly dimeric and to a lesser extent monomeric in the ER. Monomer and dimer in ERGIC and cis-Golgi network. Forms homooligomer (via GOLD domain); the assembly is promoted by direct binding with leaderless cargos and may form a protein channel that facilitates cargo entry into the ERGIC. Forms heterooligomeric complexes with other members of the p24 family such as TMED2, TMED7 and TMED9. Interacts (via GOLD domain) with TMED2 (via GOLD domain); the complex is required for export of TMED10 from the ER to the cis-Golgi network; the complex is proposed to be involved in cis-Golgi network dynamics and / or biogenesis. Associates with the COPI vesicle coat subunits (coatomer). Tetramerization of the cytoplasmic domain at the Golgi membrane in vitro; the complex is proposed to interact with COPI coatomer and induce budding of the vesicles. Interacts with COPG1; the interaction involves TMED10 homodimer. Interacts with ARF1 (GDP-bound); the interaction probably involves a TMED10 oligomer. Interacts with SEC23A, SEC24B, SEC24C and SEC24D components of the coat protein complex II/COPII, indicative of an association of TMED10 with the COPII vesicle coat. Interacts with CD59. Interacts with MPPE1/PGAP5; the complex might recruit and sort GPI-anchored proteins to the ER-exit site, or the interaction might lead to recycling of PGAP5 between the ER and the Golgi. Interacts with F2LR1/PAR2. Interacts with KDELR2/ERD2; the interaction is disrupted by KDELR2 ligand. Found in a complex composed at least of SURF4, TMED2 and TMED10. Associates with the presenilin-dependent gamma-secretase complex. Interacts with STX17; the interaction is direct. Interacts with IL-1; the interaction is direct. Interacts with RAB21 (active GTP-bound form); the interaction is indirect and regulates TMED10 abundance and localization at the Golgi. As to expression, ubiquitous.

The protein resides in the endoplasmic reticulum membrane. It localises to the endoplasmic reticulum-Golgi intermediate compartment membrane. The protein localises to the golgi apparatus membrane. It is found in the golgi apparatus. Its subcellular location is the cis-Golgi network membrane. The protein resides in the trans-Golgi network membrane. It localises to the cytoplasmic vesicle. The protein localises to the secretory vesicle membrane. It is found in the cell membrane. Its subcellular location is the melanosome. Functionally, cargo receptor involved in protein vesicular trafficking and quality control in the endoplasmic reticulum (ER) and Golgi. The p24 protein family is a group of transmembrane proteins that bind coat protein complex I/COPI and coat protein complex II/COPII involved in vesicular trafficking between the membranes. Acts at the lumenal side for incorporation of secretory cargo molecules into transport vesicles and involved in vesicle coat formation at the cytoplasmic side. Mainly functions in the early secretory pathway and cycles between the ER, ER-Golgi intermediate compartment (ERGIC) and Golgi, mediating cargo transport through COPI and COPII-coated vesicles. In COPII vesicle-mediated anterograde transport, involved in the transport of GPI-anchored proteins by acting together with TMED2 as their cargo receptor; the function specifically implies SEC24C and SEC24D of the COPII vesicle coat and lipid raft-like microdomains of the ER. Recognizes GPI anchors structural remodeled in the ER by the GPI inositol-deacylase/PGAP1 and the metallophosphoesterase MPPE1/PGAP5. In COPI vesicle-mediated retrograde transport, involved in the biogenesis of COPI vesicles and vesicle coat recruitment. Involved in trafficking of amyloid beta A4 protein and soluble APP-beta release (independent from the modulation of gamma-secretase activity). Involved in the KDELR2-mediated retrograde transport of the toxin A subunit (CTX-A-K63)together with COPI and the COOH terminus of KDELR2. On Golgi membranes, acts as a primary receptor for ARF1-GDP, a GTP-binding protein involved in COPI-vesicle formation. Increases coatomer-dependent GTPase-activating activity of ARFGAP2 which mediates the hydrolysis of ARF1-bound GTP and therefore modulates protein trafficking from the Golgi apparatus. Involved in the exocytic trafficking of G protein-coupled receptors F2LR1/PAR2 (trypsin and tryspin-like enzyme receptor), OPRM1 (opioid receptor) and P2RY4 (UTD and UDP receptor) from the Golgi to the plasma membrane, thus contributing to receptor resensitization. In addition to its cargo receptor activity, may also act as a protein channel after oligomerization, facilitating the post-translational entry of leaderless cytoplasmic cargo into the ERGIC. Involved in the translocation into ERGIC, the vesicle entry and the secretion of leaderless cargos (lacking the secretion signal sequence), including the mature form of interleukin 1/IL-1 family members, the alpha-crystallin B chain HSPB5, the carbohydrate-binding proteins galectin-1/LGALS1 and galectin-3/LGALS3, the microtubule-associated protein Tau/MAPT, and the annexin A1/ANXA1; the translocation process is dependent on cargo protein unfolding and enhanced by chaperones HSP90AB1 and HSP90B1/GRP9. Could also associates with the presenilin-dependent gamma-secretase complex in order to regulate gamma-cleavages of the amyloid beta A4 protein to yield amyloid-beta 40/Abeta40. This Rattus norvegicus (Rat) protein is Transmembrane emp24 domain-containing protein 10.